The primary structure comprises 181 residues: Extracellular superoxide dismutase [Cu-Zn] (181 aa).

The signal sequence occupies residues 1–18 (MMQYLVVSLALCATICSA). An N-linked (GlcNAc...) asparagine glycan is attached at asparagine 46. The Cu cation site is built by histidine 75, histidine 77, and histidine 92. The cysteines at positions 86 and 175 are disulfide-linked. The Zn(2+) site is built by histidine 92, histidine 100, histidine 109, and aspartate 112. N-linked (GlcNAc...) asparagine glycosylation occurs at asparagine 119. A Cu cation-binding site is contributed by histidine 149. N-linked (GlcNAc...) asparagine glycosylation is present at asparagine 159.

The protein belongs to the Cu-Zn superoxide dismutase family. Requires Cu cation as cofactor. The cofactor is Zn(2+). Expressed at higher levels in females compared to males.

The protein resides in the secreted. The catalysed reaction is 2 superoxide + 2 H(+) = H2O2 + O2. Its function is as follows. Protects the extracellular space from the toxic effects of reactive oxygen intermediates by converting superoxide radicals into hydrogen peroxide and oxygen. In Drosophila melanogaster (Fruit fly), this protein is Extracellular superoxide dismutase [Cu-Zn].